Here is a 400-residue protein sequence, read N- to C-terminus: Acetate kinase (400 aa).

Position 7 (Asn7) interacts with Mg(2+). Lys14 lines the ATP pocket. Arg91 is a substrate binding site. The Proton donor/acceptor role is filled by Asp148. ATP-binding positions include 208-212 (HLGNG), 284-286 (DMR), and 332-336 (GVGEN). Glu384 contacts Mg(2+).

Belongs to the acetokinase family. In terms of assembly, homodimer. It depends on Mg(2+) as a cofactor. Mn(2+) is required as a cofactor.

Its subcellular location is the cytoplasm. It carries out the reaction acetate + ATP = acetyl phosphate + ADP. It participates in metabolic intermediate biosynthesis; acetyl-CoA biosynthesis; acetyl-CoA from acetate: step 1/2. Catalyzes the formation of acetyl phosphate from acetate and ATP. Can also catalyze the reverse reaction. This is Acetate kinase from Coprothermobacter proteolyticus (strain ATCC 35245 / DSM 5265 / OCM 4 / BT).